The primary structure comprises 383 residues: Probable 2-succinylbenzoate--CoA ligase (383 aa).

It belongs to the ATP-dependent AMP-binding enzyme family. MenE subfamily.

It catalyses the reaction 2-succinylbenzoate + ATP + CoA = 2-succinylbenzoyl-CoA + AMP + diphosphate. It participates in quinol/quinone metabolism; 1,4-dihydroxy-2-naphthoate biosynthesis; 1,4-dihydroxy-2-naphthoate from chorismate: step 5/7. It functions in the pathway quinol/quinone metabolism; menaquinone biosynthesis. Its function is as follows. Converts 2-succinylbenzoate (OSB) to 2-succinylbenzoyl-CoA (OSB-CoA). May be involved in the biosynthesis of menaquinone. This Mycobacterium tuberculosis (strain CDC 1551 / Oshkosh) protein is Probable 2-succinylbenzoate--CoA ligase (menE).